Here is a 564-residue protein sequence, read N- to C-terminus: 3beta-hydroxysteroid-dehydrogenase/decarboxylase isoform 2 (564 aa).

16 to 21 (GGRGFA) is a binding site for NAD(+). 2 N-linked (GlcNAc...) asparagine glycosylation sites follow: Asn146 and Asn158. Positions 161 and 165 each coordinate NAD(+). The Proton donor role is filled by Lys165. The region spanning 384-564 (VADTLLWKDL…EKLFGSKKHD (181 aa)) is the Reticulon domain. The next 2 membrane-spanning stretches (helical) occupy residues 398 to 418 (IAIFILISIYYNFVATGSTVV) and 424 to 444 (ALLVASVFLFLHGILPEKIFG). N-linked (GlcNAc...) asparagine glycosylation occurs at Asn474. 2 consecutive transmembrane segments (helical) span residues 486–506 (GNDWSFFFKVVFVLLALSLAG) and 507–527 (AISLHSIFVIGLPIAFLAFLV).

It belongs to the 3-beta-HSD family.

It is found in the endoplasmic reticulum membrane. The enzyme catalyses a 3beta-hydroxysteroid-4alpha-carboxylate + NAD(+) = a 3-oxosteroid + CO2 + NADH. It catalyses the reaction 4alpha-carboxy-4beta,14alpha-dimethyl-9beta,19-cyclo-5alpha-ergost-24(24(1))-en-3beta-ol + NAD(+) = cycloeucalenone + CO2 + NADH. Its pathway is steroid biosynthesis; zymosterol biosynthesis; zymosterol from lanosterol: step 4/6. Its function is as follows. 3beta-hydroxysteroid-dehydrogenase/decarboxylase involved in sterol synthesis. Catalyzes the formation of 3-oxosteroids from 3beta-hydroxysteroids-4alpha-carboxylate. Involved in the regulation of inflorescence internodes and leaves growth, probably by affecting auxin transporter activity possibly by altering sterol composition in the membranes. The polypeptide is 3beta-hydroxysteroid-dehydrogenase/decarboxylase isoform 2 (Arabidopsis thaliana (Mouse-ear cress)).